Consider the following 581-residue polypeptide: Multidrug resistance-like ATP-binding protein MdlA (581 aa).

Residues 18 to 303 (YLGSIILLII…LAWMFNIVER (286 aa)) enclose the ABC transmembrane type-1 domain. Transmembrane regions (helical) follow at residues 23 to 43 (ILLI…GILI), 53 to 73 (GFEI…VYIL), 127 to 149 (VVFA…ISVL), 153 to 175 (ITQI…AILI), 247 to 267 (VIYL…GWLV), and 280 to 300 (FIMY…MFNI). Residues 337–571 (INIDMFFYPK…KNWYKSMYDH (235 aa)) enclose the ABC transporter domain. 369-376 (GPTGAGKS) contacts ATP.

Belongs to the ABC transporter superfamily. Drug exporter-2 (TC 3.A.1.117) family.

The protein localises to the cell membrane. It carries out the reaction ATP + H2O + xenobioticSide 1 = ADP + phosphate + xenobioticSide 2.. This chain is Multidrug resistance-like ATP-binding protein MdlA (mdlA), found in Buchnera aphidicola subsp. Schizaphis graminum (strain Sg).